Reading from the N-terminus, the 557-residue chain is Potassium-transporting ATPase potassium-binding subunit (557 aa).

A run of 12 helical transmembrane segments spans residues 5 to 25 (GFLL…PLGS), 63 to 83 (LCAI…MLLG), 132 to 152 (GLTV…FAFI), 170 to 190 (LLRI…LFFI), 253 to 273 (FVQM…FGEV), 283 to 303 (LLWA…WAEV), 329 to 349 (VLVS…AVIA), 356 to 376 (ALGG…FGGV), 379 to 399 (GLYG…LMIG), 416 to 436 (LTAL…ALAM), 484 to 504 (LLAF…MAIA), and 526 to 546 (LFVG…FIPA).

This sequence belongs to the KdpA family. The system is composed of three essential subunits: KdpA, KdpB and KdpC.

Its subcellular location is the cell inner membrane. Its function is as follows. Part of the high-affinity ATP-driven potassium transport (or Kdp) system, which catalyzes the hydrolysis of ATP coupled with the electrogenic transport of potassium into the cytoplasm. This subunit binds the periplasmic potassium ions and delivers the ions to the membrane domain of KdpB through an intramembrane tunnel. The polypeptide is Potassium-transporting ATPase potassium-binding subunit (Shigella boydii serotype 4 (strain Sb227)).